The chain runs to 408 residues: Substance-P receptor (408 aa).

Residues 1-32 (MNSNISAQNDSALNSTIQNGTKINQFIQPPWQ) lie on the Extracellular side of the membrane. N4, N9, N14, and N19 each carry an N-linked (GlcNAc...) asparagine glycan. Residues 33–55 (IALWSVAYSIIVIVSLVGNIIVM) form a helical membrane-spanning segment. The Cytoplasmic portion of the chain corresponds to 56–65 (WIIIAHKRMR). A helical membrane pass occupies residues 66–87 (TVTNYFLVNLAFAEASMSAFNT). Residues 88 to 107 (VINFTYAIHNHWYYGLIYCK) lie on the Extracellular side of the membrane. A disulfide bridge links C106 with C181. The helical transmembrane segment at 108 to 129 (FHNFFPISAVFTSIYSMTAIAL) threads the bilayer. Over 130-149 (DRYMAIIHPLKPRLSATATK) the chain is Cytoplasmic. A helical membrane pass occupies residues 150 to 170 (IVICVIWSFSFCMAFPLGYYA). Over 171 to 196 (DVYPMEGGDICYLNWPDSEENRKYEQ) the chain is Extracellular. Residues 197–221 (VYQVLVFCLIYILPLLVIGCAYTFI) form a helical membrane-spanning segment. Residues 222 to 250 (GMTLWASEIPGDSSDRYHEQVVAKRKVVK) are Cytoplasmic-facing. A helical transmembrane segment spans residues 251–272 (MMIVVVCTFAICWLPFHIFFLL). Over 273–283 (QTLHEMTQKFY) the chain is Extracellular. Residues 284–308 (QQFYLAIMWLAMSSTMYNPIIYCCL) traverse the membrane as a helical segment. Residues 309–408 (NDRFRIGFKH…SSSFYSNNLA (100 aa)) lie on the Cytoplasmic side of the membrane. C323 is lipidated: S-palmitoyl cysteine. Positions 366–408 (DEEAEENGKSSKRLSLDLTSNGSSRSVCKTMSDSSSFYSNNLA) are disordered. A compositionally biased stretch (polar residues) spans 382–408 (DLTSNGSSRSVCKTMSDSSSFYSNNLA).

It belongs to the G-protein coupled receptor 1 family.

It is found in the cell membrane. In terms of biological role, this is a receptor for the tachykinin neuropeptide substance P. It is probably associated with G proteins that activate a phosphatidylinositol-calcium second messenger system. The protein is Substance-P receptor (TACR1) of Aquarana catesbeiana (American bullfrog).